The chain runs to 253 residues: Phosphoribosylaminoimidazole-succinocarboxamide synthase (253 aa).

The protein belongs to the SAICAR synthetase family.

It carries out the reaction 5-amino-1-(5-phospho-D-ribosyl)imidazole-4-carboxylate + L-aspartate + ATP = (2S)-2-[5-amino-1-(5-phospho-beta-D-ribosyl)imidazole-4-carboxamido]succinate + ADP + phosphate + 2 H(+). Its pathway is purine metabolism; IMP biosynthesis via de novo pathway; 5-amino-1-(5-phospho-D-ribosyl)imidazole-4-carboxamide from 5-amino-1-(5-phospho-D-ribosyl)imidazole-4-carboxylate: step 1/2. This chain is Phosphoribosylaminoimidazole-succinocarboxamide synthase, found in Jannaschia sp. (strain CCS1).